A 370-amino-acid polypeptide reads, in one-letter code: Probable protein phosphatase 2C 67 (370 aa).

The 310-residue stretch at 35-344 (TFGEFSMAMI…DDITVIVVYL (310 aa)) folds into the PPM-type phosphatase domain. Asp77, Gly78, Asp276, and Asp335 together coordinate Mn(2+).

Belongs to the PP2C family. In terms of assembly, interacts with SAUR19. Interacts with AHA2 at the plasma membrane. Requires Mg(2+) as cofactor. It depends on Mn(2+) as a cofactor.

It localises to the cell membrane. The enzyme catalyses O-phospho-L-seryl-[protein] + H2O = L-seryl-[protein] + phosphate. It catalyses the reaction O-phospho-L-threonyl-[protein] + H2O = L-threonyl-[protein] + phosphate. In terms of biological role, dephosphorylates and represses plasma membrane H(+)-ATPases (PM H(+)-ATPases, e.g. AHA1 and AHA2), thus influencing negatively plant growth and fitness. Promotes the apical hook maintenance of etiolated seedlings. This Arabidopsis thaliana (Mouse-ear cress) protein is Probable protein phosphatase 2C 67.